The sequence spans 349 residues: N-formyl peptide receptor 3 (349 aa).

At 1–27 the chain is on the extracellular side; it reads METNFSIPLNESEEVLPEPAGHTVLWI. 2 N-linked (GlcNAc...) asparagine glycosylation sites follow: Asn-4 and Asn-10. Residues 28-50 traverse the membrane as a helical segment; sequence FSLLVHGVTFIFGVLGNGLVIWV. Residues 51 to 61 lie on the Cytoplasmic side of the membrane; it reads AGFRMTRTVNT. The helical transmembrane segment at 62–83 threads the bilayer; it reads ICYLNLALADFSFSAILPFRMV. The Extracellular segment spans residues 84–100; that stretch reads SVAMREKWPFGTFLCKL. A disulfide bridge connects residues Cys-98 and Cys-176. Residues 101-121 traverse the membrane as a helical segment; that stretch reads VHVMIDINLFVSVYLITIIAL. Residues 122–140 lie on the Cytoplasmic side of the membrane; sequence DRCICVLHPAWAQNHRTMS. A helical transmembrane segment spans residues 141–162; that stretch reads LAKRVMMGLWILAIVLTLPNFI. Residues 163–205 are Extracellular-facing; that stretch reads FWTTISTKNGDTYCIFNFPFWGDTAVERLNAFITMGKVFLILH. Residues 206-226 traverse the membrane as a helical segment; the sequence is FIIGFSMPMSIITVCYGIIAA. Over 227–242 the chain is Cytoplasmic; the sequence is KIHRNHMIKSSSPLRV. Residues 243–266 form a helical membrane-spanning segment; sequence FAAVVASFFICWFPYELIGILMAV. The Extracellular segment spans residues 267–286; that stretch reads WLKEMLLNGKYKIILVLLNP. A helical transmembrane segment spans residues 287–306; that stretch reads TSSLAFFNSCLNPILYVFLG. Residues 307–349 lie on the Cytoplasmic side of the membrane; sequence SNFQERLIRSLPTSLERALTEVPDSAQTSNTHTNSASPPEETE. Positions 328–349 are disordered; sequence VPDSAQTSNTHTNSASPPEETE. The span at 331 to 343 shows a compositional bias: polar residues; that stretch reads SAQTSNTHTNSAS.

It belongs to the G-protein coupled receptor 1 family.

It is found in the cell membrane. Its function is as follows. Low affinity receptor for N-formyl-methionyl peptides, which are powerful neutrophils chemotactic factors. Binding of FMLP to the receptor causes activation of neutrophils. This response is mediated via a G-protein that activates a phosphatidylinositol-calcium second messenger system. The polypeptide is N-formyl peptide receptor 3 (FPR3) (Pongo pygmaeus (Bornean orangutan)).